Here is a 1318-residue protein sequence, read N- to C-terminus: MLRTSGLALLALVSAVGPSQASGFTEKGLSLLGYQLCSHRVTHTVQKVEAVQTSYTSYVSCGGWIPWRRCPKMVYRTQYLVVEVPESRNVTDCCEGYEQLGLYCVLPLNQSGQFTSRPGACPAEGPEPSTSPCSLDIDCPGLEKCCPWSGGRYCMAPAPQAPERDPVGSWYNVTILVKMDFKELQQVDPRLLNHMRLLHSLVTSALQPMASTVHHLHSAPGNASTTVSRLLLGLPRPLPVADVSTLLGDIAKRVYEVISVQVQDVNECFYEELNACSGRELCANLEGSYWCVCHQEAPATSPRKLNLEWEDCPPVSDYVVLNVTSDSFQVSWRLNSTQNHTFHVRVYRGMELLRSARTQSQALAVAGLEAGVLYRVKTSYQGCGADVSTTLTIKTNAQVFEVTIKIVNHNLTEKLLNRSSVEYQDFSRQLLHEVESSFPPVVSDLYRSGKLRMQIVSLQAGSVVVRLKLTVQDPGFPMGISTLAPILQPLLASTVFQIDRQGTRVQDWDECVDSAEHDCSPAAWCINLEGSYTCQCRTTRDATPSRAGRACEGDLVSPMGGGLSAATGVTVPGLGTGTAALGLENFTLSPSPGYPQGTPAAGQAWTPEPSPRRGGSNVVGYDRNNTGKGVEQELQGNSIMEPPSWPSPTEDPTGHFLWHATRSTRETLLNPTWLRNEDSGPSGSVDLPLTSTLTALKTPACVPVSIGRIMVSNVTSTGFHLAWEADLAMDSTFQLTLTSMWSPAVVLETWNTSVTLSGLEPGVLHLVEIMAKACGKEGARAHLKVRTAARKLIGKVRIKNVRYSESFRNASSQEYRDFLELFFRMVRGSLPATMCQHMDAGGVRMEVVSVTNGSIVVEFHLLIIADVDVQEVSAAFLTAFQTVPLLEVIRGDTFIQDYDECERKEDDCVPGTSCRNTLGSFTCSCEGGAPDFPVEYSERPCEGDSPGNETWATSPERPLTTAGTKAAFVQGTSPTPQGLPQRLNLTGAVRVLCEIEKVVVAIQKRFLQQESIPESSLYLSHPSCNVSHSNGTHVLLEAGWSECGTLMQSNMTNTVVRTTLRNDLSQEGIIHHLKILSPIYCAFQNDLLTSSGFTLEWGVYTIIEDLHGAGNFVTEMQLFIGDSPIPQNYSVSASDDVRIEVGLYRQKSNLKVVLTECWATPSSNARDPITFSFINNSCPVPNTYTNVIENGNSNKAQFKLRIFSFINDSIVYLHCKLRVCMESPGATCKINCNNFRLLQNSETSATHQMSWGPLIRSEGEPPHAEAGLGAGYVVLIVVAIFVLVAGTATLLIVRYQRMNGRYNFKIQSNNFSYQVFYE.

Positions Met-1–Ala-21 are cleaved as a signal peptide. Residues Ser-22–Tyr-1272 are Extracellular-facing. The 74-residue stretch at Gly-33–Leu-106 folds into the EMI domain. Intrachain disulfides connect Cys-37/Cys-94, Cys-61/Cys-70, and Cys-93/Cys-104. Asn-89 carries an N-linked (GlcNAc...) asparagine glycan. An N-linked (GlcNAc...) asparagine glycan is attached at Asn-109. Positions Phe-114–Ala-158 constitute a WAP domain. Asn-172 is a glycosylation site (N-linked (GlcNAc...) asparagine). In terms of domain architecture, EGF-like 1; calcium-binding spans Asp-264–Pro-313. In terms of domain architecture, Fibronectin type-III 1 spans Pro-314–Gln-398. Asn-322, Asn-335, and Asn-417 each carry an N-linked (GlcNAc...) asparagine glycan. Residues Asn-396–Glu-510 enclose the SEA 1 domain. The EGF-like 2; calcium-binding domain maps to Asp-507–Glu-552. 3 cysteine pairs are disulfide-bonded: Cys-511–Cys-525, Cys-519–Cys-534, and Cys-536–Cys-551. Asn-585 carries N-linked (GlcNAc...) asparagine glycosylation. Positions Gly-593 to His-655 are disordered. The Fibronectin type-III 2 domain occupies Val-702–Lys-791. N-linked (GlcNAc...) asparagine glycosylation occurs at Asn-713. An SEA 2 domain is found at Ala-788 to Glu-900. An EGF-like 3; calcium-binding domain is found at Asp-897–Glu-938. 2 disulfide bridges follow: Cys-901/Cys-914 and Cys-908/Cys-923. The interval Glu-938 to Arg-957 is disordered. N-linked (GlcNAc...) asparagine glycans are attached at residues Asn-984 and Asn-1050. The region spanning Leu-992–Phe-1235 is the ZP domain. Residues Cys-1157 and Cys-1215 are joined by a disulfide bond. A helical membrane pass occupies residues Val-1273 to Val-1293. The Cytoplasmic portion of the chain corresponds to Arg-1294–Glu-1318.

As to expression, isoform 4 is expressed at low level in kidney, testis and fetal thymus. Isoform 3 is expressed at low level in prostate, testis and fetal thymus.

It is found in the cell membrane. The protein localises to the cytoplasm. This Homo sapiens (Human) protein is Uromodulin-like 1 (UMODL1).